We begin with the raw amino-acid sequence, 195 residues long: U8 snoRNA-decapping enzyme (195 aa).

The region spanning 18-173 is the Nudix hydrolase domain; that stretch reads GWRHACHALL…IGSAREQLLE (156 aa). His24, Arg50, and Phe57 together coordinate substrate. 4 residues coordinate Mn(2+): Gly59, Glu76, Glu80, and His99. Residues 61 to 82 carry the Nudix box motif; that stretch reads FVDTQDRSLEDGLNRELREELG. Gln170 is a binding site for substrate. Glu173 provides a ligand contact to Mn(2+).

It belongs to the Nudix hydrolase family. NUDT16 subfamily. In terms of assembly, homodimer. The cofactor is Mg(2+). Requires Mn(2+) as cofactor. Co(2+) is required as a cofactor. In terms of tissue distribution, expressed strongly in lung, kidney, adrenal gland, testis, heart and brain.

The protein resides in the nucleus. It localises to the nucleoplasm. It is found in the nucleolus. Its subcellular location is the cytoplasm. The enzyme catalyses a 5'-end (N(7)-methyl 5'-triphosphoguanosine)-ribonucleoside in mRNA + H2O = N(7)-methyl-GDP + a 5'-end phospho-ribonucleoside in mRNA + 2 H(+). It carries out the reaction IDP + H2O = IMP + phosphate + H(+). It catalyses the reaction dIDP + H2O = dIMP + phosphate + H(+). The catalysed reaction is a 5'-end NAD(+)-phospho-ribonucleoside in mRNA + H2O = a 5'-end phospho-adenosine-phospho-ribonucleoside in mRNA + beta-nicotinamide D-ribonucleotide + 2 H(+). The enzyme catalyses a 5'-end FAD-phospho-ribonucleoside in mRNA + H2O = a 5'-end phospho-adenosine-phospho-ribonucleoside in mRNA + FMN + 2 H(+). It carries out the reaction a 5'-end CoA-ribonucleoside in mRNA + H2O = a 5'-end phospho-adenosine-phospho-ribonucleoside in mRNA + (R)-4'-phosphopantetheine + 2 H(+). Its activity is regulated as follows. The phosphatase activity is inhibited by the product IMP. Functionally, RNA-binding and decapping enzyme that catalyzes the cleavage of the cap structure of snoRNAs and mRNAs in a metal-dependent manner. Part of the U8 snoRNP complex that is required for the accumulation of mature 5.8S and 28S rRNA. Has diphosphatase activity and removes m7G and/or m227G caps from U8 snoRNA and leaves a 5'monophosphate on the RNA. Also catalyzes the cleavage of the cap structure on mRNAs. Does not hydrolyze cap analog structures like 7-methylguanosine nucleoside triphosphate (m7GpppG). Also hydrolysis m7G- and m227G U3-capped RNAs but with less efficiencies. Has broad substrate specificity with manganese or cobalt as cofactor and can act on various RNA species. Binds to the U8 snoRNA; metal is not required for RNA-binding. May play a role in the regulation of snoRNAs and mRNAs degradation. Also acts as a phosphatase; hydrolyzes the non-canonical purine nucleotides inosine diphosphate (IDP) and deoxyinosine diphosphate (dITP) as well as guanosine diphosphate (GDP), deoxyguanosine diphosphate (dGDP), xanthine diphosphate (XDP), inosine triphosphate (ITP) and deoxyinosine triphosphate (ITP) to their respective monophosphate derivatives and does not distinguish between the deoxy- and ribose forms. The order of activity with different substrates is IDP &gt; dIDP &gt;&gt; GDP = dGDP &gt; XDP = ITP = dITP. Binds strongly to GTP, ITP and XTP. Participates in the hydrolysis of dIDP/IDP and probably excludes non-canonical purines from RNA and DNA precursor pools, thus preventing their incorporation into RNA and DNA and avoiding chromosomal lesions. Exhibits decapping activity towards NAD-capped RNAs and FAD-capped RNAs. Exhibits decapping activity towards dpCoA-capped RNAs in vitro. The chain is U8 snoRNA-decapping enzyme (NUDT16) from Homo sapiens (Human).